The primary structure comprises 128 residues: Ribosome-binding factor A (128 aa).

This sequence belongs to the RbfA family. Monomer. Binds 30S ribosomal subunits, but not 50S ribosomal subunits or 70S ribosomes.

The protein localises to the cytoplasm. One of several proteins that assist in the late maturation steps of the functional core of the 30S ribosomal subunit. Associates with free 30S ribosomal subunits (but not with 30S subunits that are part of 70S ribosomes or polysomes). Required for efficient processing of 16S rRNA. May interact with the 5'-terminal helix region of 16S rRNA. The protein is Ribosome-binding factor A of Haemophilus influenzae (strain 86-028NP).